We begin with the raw amino-acid sequence, 297 residues long: Homoserine kinase (297 aa).

82-92 (PLTRGLGSSAS) is a binding site for ATP.

It belongs to the GHMP kinase family. Homoserine kinase subfamily.

The protein resides in the cytoplasm. The enzyme catalyses L-homoserine + ATP = O-phospho-L-homoserine + ADP + H(+). It participates in amino-acid biosynthesis; L-threonine biosynthesis; L-threonine from L-aspartate: step 4/5. In terms of biological role, catalyzes the ATP-dependent phosphorylation of L-homoserine to L-homoserine phosphate. The sequence is that of Homoserine kinase from Bacillus cereus (strain AH187).